The following is a 550-amino-acid chain: Vacuolar protein 8 (550 aa).

The N-myristoyl glycine moiety is linked to residue glycine 2. 2 S-palmitoyl cysteine lipidation sites follow: cysteine 4 and cysteine 7. 8 ARM repeats span residues 75–114 (TEKD…NLAV), 116–155 (AENK…NLAT), 157–196 (DENK…NMTH), 198–237 (YENR…NIAV), 241–280 (HRKR…NLAS), 282–321 (ERYQ…NISI), 323–363 (PLNE…NLAA), and 454–493 (FIEC…QLLE). A Phosphothreonine modification is found at threonine 548. Serine 550 is modified (phosphoserine).

This sequence belongs to the beta-catenin family.

The protein localises to the golgi apparatus membrane. The protein resides in the vacuole membrane. Functions in both vacuole inheritance and protein targeting from the cytoplasm to vacuole. This Schizosaccharomyces pombe (strain 972 / ATCC 24843) (Fission yeast) protein is Vacuolar protein 8 (vac8).